An 836-amino-acid chain; its full sequence is Pentatricopeptide repeat-containing protein At1g79490, mitochondrial (836 aa).

The N-terminal 85 residues, 1–85 (MIRGRTAKVI…QCRSIVRRFC (85 aa)), are a transit peptide targeting the mitochondrion. 12 PPR repeats span residues 204 to 238 (SDECYVVLFDGLNQGRDFVGIQSLFEEMVQDSSSH), 242 to 276 (SFNAYNQVIQYLAKAEKLEVAFCCFKKAQESGCKI), 277 to 311 (DTQTYNNLMMLFLNKGLPYKAFEIYESMEKTDSLL), 312 to 346 (DGSTYELIIPSLAKSGRLDAAFKLFQQMKERKLRP), 347 to 381 (SFSVFSSLVDSMGKAGRLDTSMKVYMEMQGFGHRP), 382 to 416 (SATMFVSLIDSYAKAGKLDTALRLWDEMKKSGFRP), 417 to 451 (NFGLYTMIIESHAKSGKLEVAMTVFKDMEKAGFLP), 452 to 486 (TPSTYSCLLEMHAGSGQVDSAMKIYNSMTNAGLRP), 487 to 521 (GLSSYISLLTLLANKRLVDVAGKILLEMKAMGYSV), 528 to 555 (VLMIYIKDASVDLALKWLRFMGSSGIKT), 556 to 590 (NNFIIRQLFESCMKNGLYDSARPLLETLVHSAGKV), and 591 to 625 (DLVLYTSILAHLVRCQDEDKERQLMSILSATKHKA). The Smr domain occupies 710–786 (LDVRNLSVGA…APGELVMEWF (77 aa)).

This sequence belongs to the PPR family. P subfamily.

The protein resides in the mitochondrion. The chain is Pentatricopeptide repeat-containing protein At1g79490, mitochondrial (EMB2217) from Arabidopsis thaliana (Mouse-ear cress).